An 88-amino-acid chain; its full sequence is Large ribosomal subunit protein bL27 (88 aa).

The disordered stretch occupies residues 1–21; it reads MAHKKGASSSRNGRDSAAQRL.

Belongs to the bacterial ribosomal protein bL27 family.

The polypeptide is Large ribosomal subunit protein bL27 (Mycobacterium avium (strain 104)).